Consider the following 602-residue polypeptide: Sulfite reductase [NADPH] flavoprotein alpha-component (602 aa).

Residues 68 to 206 (ITIISASQTG…NYIQWSEELL (139 aa)) form the Flavodoxin-like domain. FMN is bound by residues 74 to 79 (SQTGNA), 121 to 124 (STQG), and 157 to 166 (LGDVSYNLFC). Positions 237-451 (YKPAVATVLL…VEEKSNFRLP (215 aa)) constitute an FAD-binding FR-type domain. Residues threonine 325, lysine 359, 389–392 (RLYS), 407–409 (TVG), and 422–425 (GGSS) contribute to the FAD site. NADP(+) is bound by residues 522 to 523 (SR), 528 to 532 (KIYVQ), and aspartate 564. Tyrosine 602 contributes to the FAD binding site.

This sequence belongs to the NADPH-dependent sulphite reductase flavoprotein subunit CysJ family. In the N-terminal section; belongs to the flavodoxin family. The protein in the C-terminal section; belongs to the flavoprotein pyridine nucleotide cytochrome reductase family. In terms of assembly, alpha(8)-beta(8). The alpha component is a flavoprotein, the beta component is a hemoprotein. It depends on FAD as a cofactor. FMN serves as cofactor.

It catalyses the reaction hydrogen sulfide + 3 NADP(+) + 3 H2O = sulfite + 3 NADPH + 4 H(+). The protein operates within sulfur metabolism; hydrogen sulfide biosynthesis; hydrogen sulfide from sulfite (NADPH route): step 1/1. Component of the sulfite reductase complex that catalyzes the 6-electron reduction of sulfite to sulfide. This is one of several activities required for the biosynthesis of L-cysteine from sulfate. The flavoprotein component catalyzes the electron flow from NADPH -&gt; FAD -&gt; FMN to the hemoprotein component. This Buchnera aphidicola subsp. Schizaphis graminum (strain Sg) protein is Sulfite reductase [NADPH] flavoprotein alpha-component.